The sequence spans 4456 residues: Dynein axonemal heavy chain 2 (4456 aa).

Residues 1–12 (MASKAEKKRKVA) are compositionally biased toward basic residues. Residues 1–55 (MASKAEKKRKVAGRGGARAGRVVRAPQSTAGPGATEASLLPDGQEPEPESGKEDS) are disordered. The tract at residues 1–1795 (MASKAEKKRK…RQTNTQFQYG (1795 aa)) is stem. Residues 1218–1274 (LDQIAQMRAMLMAMRDEENNLRSNLGIFKIEQPVSKDLQILEKELDALQQVWEITRD) are a coiled coil. The TPR 1 repeat unit spans residues 1439–1474 (EDNQVALSTMKASRFVKAFEKDVDHWERCLSLILEV). 4 AAA regions span residues 1794–2015 (YGYE…LLRY), 2075–2302 (DTIE…DNCN), 2407–2654 (RYPP…VFQG), and 2751–3003 (EYNL…LRRY). Residues 1832–1839 (GPAGTGKT), 2113–2120 (GGTGSSKT), and 2445–2452 (GPVGTGKT) contribute to the ATP site. Residues 2750 to 2783 (NEYNLSPSVVPMQLVLFREAIEHITRIVRVIGQP) form a TPR 2 repeat. 2791–2798 (GIGGSGRQ) contacts ATP. The segment at 3018–3301 (YKKLLGEKRQ…EELRKKSEEM (284 aa)) is stalk. Residues 3041-3078 (FKIDETREKVEVMSLELEDAKKKVAEFQKQCEEYLVII) are a coiled coil. The TPR 3 repeat unit spans residues 3101–3134 (IEEVKCQALADNAQKDLEEALPALEEAMRALESL). Coiled coils occupy residues 3245–3333 (KRIR…EEDL) and 3552–3596 (VRKE…GSLL). AAA regions lie at residues 3387–3617 (LTNP…EVTE) and 3833–4052 (VTSF…LLSL). 2 TPR repeats span residues 4101–4134 (TTPF…LPSM) and 4135–4169 (DPPE…QPQI).

It belongs to the dynein heavy chain family. As to quaternary structure, part of the axonemal inner dynein arm complex that consists of at least two heavy chains and a number of intermediate and light chains. Interacts with DNAI4.

It localises to the cytoplasm. Its subcellular location is the cytoskeleton. It is found in the cilium axoneme. The protein localises to the flagellum axoneme. Its function is as follows. As part of the axonemal inner dynein arm complex plays a central role in ciliary beat. Expressed in sperm flagellum, it is required for sperm motility. Dyneins are microtubule-based molecular motors possessing ATPase activities that can convert the chemical energy of ATP into relative sliding between adjacent microtubule doublets to generate ciliary bending. This Mus musculus (Mouse) protein is Dynein axonemal heavy chain 2.